The sequence spans 747 residues: WD repeat-containing protein 91 (747 aa).

A coiled-coil region spans residues 183–227; sequence QRTNQVQEENEVLRQKLFALQAEVHRLKKEEQQQEEAAALVQHKL. A Phosphoserine modification is found at Ser256. Residues 265–278 are compositionally biased toward low complexity; it reads LLPQSKKSPSRLSP. The interval 265–358 is disordered; it reads LLPQSKKSPS…SQTQCAEKKL (94 aa). Polar residues predominate over residues 283 to 299; the sequence is PQAQSSAKKDTFSSQAT. Ser288 is subject to Phosphoserine. The segment covering 332–343 has biased composition (basic and acidic residues); that stretch reads RLQDHGKERREL. The segment covering 344–353 has biased composition (polar residues); that stretch reads LSTSSSQTQC. 7 WD repeats span residues 406-445, 448-488, 511-555, 560-599, 602-641, 664-702, and 709-747; these read EHHS…QTKA, ISKS…NLCE, VCSA…QQLQ, PEPI…CAMS, AHCG…LKVS, VQVP…KVLE, and GHRA…AHKL.

Belongs to the WD repeat WDR91 family. Interacts with WDR81; involved in early to late endosome cargo transport. Interacts with BECN1; negatively regulates the PI3 kinase/PI3K activity associated with endosomal membranes.

It is found in the early endosome membrane. It localises to the late endosome membrane. Its function is as follows. Functions as a negative regulator of the PI3 kinase/PI3K activity associated with endosomal membranes via BECN1, a core subunit of the PI3K complex. By modifying the phosphatidylinositol 3-phosphate/PtdInsP3 content of endosomal membranes may regulate endosome fusion, recycling, sorting and early to late endosome transport. It is for instance, required for the delivery of cargos like BST2/tetherin from early to late endosome and thereby participates indirectly to their degradation by the lysosome. May play a role in meiosis. This chain is WD repeat-containing protein 91, found in Rattus norvegicus (Rat).